Consider the following 489-residue polypeptide: FAD-containing monooxygenase EthA (489 aa).

FAD is bound by residues serine 15, glutamate 36, 44–47 (TWDL), aspartate 56, and valine 104. Position 54–56 (54–56 (RSD)) interacts with NADP(+). NADP(+) contacts are provided by residues 183-189 (SGATAVT) and 207-208 (RS).

The protein belongs to the FAD-binding monooxygenase family. Requires FAD as cofactor.

Its subcellular location is the cell membrane. The enzyme catalyses ethionamide + NADPH + O2 + H(+) = ethionamide S-oxide + NADP(+) + H2O. Its function is as follows. Monooxygenase able to convert a wide range of ketones to the corresponding esters or lactones via a Baeyer-Villiger oxidation reaction. Can act on long-chain aliphatic ketones (2-hexanone to 2-dodecanone) and on aromatic ketones (phenylacetone and benzylacetone). Is also able to catalyze enantioselective sulfoxidation of methyl-p-tolylsulfide. In vivo, likely functions as a BVMO, but the exact nature of the physiological substrate(s) remains to be established. Functionally, is responsible for the activation of several thiocarbamide-containing pro-drugs, such as ethionamide (ETH), isoxyl (ISO) and thiacetazone (TAC), into reactive species. The polypeptide is FAD-containing monooxygenase EthA (ethA) (Mycobacterium bovis (strain ATCC BAA-935 / AF2122/97)).